The following is a 47-amino-acid chain: PhoP/PhoQ regulator MgrB (47 aa).

A helical membrane pass occupies residues 6–26; the sequence is WVVLGIVVVVCLLLWAQVFNI.

The protein belongs to the MgrB family. May form homooligomers. Probably interacts with the periplasmic domain of PhoQ.

It localises to the cell inner membrane. Its function is as follows. PhoP-regulated transcription is redox-sensitive, being activated when the periplasm becomes more reducing. MgrB acts between DsbA/DsbB and PhoP/PhoQ in this pathway. Represses PhoP/PhoQ signaling, possibly by binding to the periplasmic domain of PhoQ, altering its activity and that of downstream effector PhoP. The polypeptide is PhoP/PhoQ regulator MgrB (Salmonella agona (strain SL483)).